A 99-amino-acid polypeptide reads, in one-letter code: Transcription and mRNA export factor SUS1 (99 aa).

Belongs to the ENY2 family. As to quaternary structure, component of the nuclear pore complex (NPC)-associated TREX-2 complex (transcription and export complex 2), composed of at least SUS1, SAC3, THP1, SEM1, and CDC31. TREX-2 contains 2 SUS1 chains. The TREX-2 complex interacts with the nucleoporin NUP1. Component of the 1.8 MDa SAGA transcription coactivator-HAT complex. SAGA is built of 5 distinct domains with specialized functions. Within the SAGA complex, SUS1, SGF11, SGF73 and UBP8 form an additional subcomplex of SAGA called the DUB module (deubiquitination module). Interacts directly with THP1, SAC3, SGF11, and with the RNA polymerase II.

It localises to the nucleus. The protein localises to the nucleoplasm. The protein resides in the cytoplasm. Its subcellular location is the P-body. Functionally, involved in mRNA export coupled transcription activation by association with both the TREX-2 and the SAGA complexes. At the promoters, SAGA is required for recruitment of the basal transcription machinery. It influences RNA polymerase II transcriptional activity through different activities such as TBP interaction and promoter selectivity, interaction with transcription activators, and chromatin modification through histone acetylation and deubiquitination. Within the SAGA complex, participates in a subcomplex required for deubiquitination of H2B and for the maintenance of steady-state H3 methylation levels. The TREX-2 complex functions in docking export-competent ribonucleoprotein particles (mRNPs) to the nuclear entrance of the nuclear pore complex (nuclear basket). TREX-2 participates in mRNA export and accurate chromatin positioning in the nucleus by tethering genes to the nuclear periphery. May also be involved in cytoplasmic mRNA decay by interaction with components of P-bodies. The protein is Transcription and mRNA export factor SUS1 of Eremothecium gossypii (strain ATCC 10895 / CBS 109.51 / FGSC 9923 / NRRL Y-1056) (Yeast).